A 657-amino-acid chain; its full sequence is uncharacterized protein (657 aa).

The signal sequence occupies residues 1 to 17 (MACVLACVAVLIGAASA).

This is an uncharacterized protein from Orgyia pseudotsugata (Douglas-fir tussock moth).